The sequence spans 141 residues: Hemoglobin subunit alpha-1/2 (141 aa).

The Globin domain maps to 1–141; the sequence is VLSPADKKNV…VSTVLTSKYR (141 aa). Residue Ser-3 is modified to Phosphoserine. Lys-7 and Lys-11 each carry N6-succinyllysine. The residue at position 16 (Lys-16) is an N6-acetyllysine; alternate. Lys-16 is subject to N6-succinyllysine; alternate. Tyr-24 is subject to Phosphotyrosine. Ser-35 carries the phosphoserine modification. Lys-40 is modified (N6-succinyllysine). Ser-49 bears the Phosphoserine mark. Residue His-58 coordinates O2. Residue His-87 coordinates heme b. Ser-102 is subject to Phosphoserine. Thr-108 carries the post-translational modification Phosphothreonine. 2 positions are modified to phosphoserine: Ser-124 and Ser-131. A phosphothreonine mark is found at Thr-134 and Thr-137. Phosphoserine is present on Ser-138.

The protein belongs to the globin family. Heterotetramer of two alpha chains and two beta chains. Red blood cells.

Functionally, involved in oxygen transport from the lung to the various peripheral tissues. The polypeptide is Hemoglobin subunit alpha-1/2 (Mandrillus sphinx (Mandrill)).